The sequence spans 306 residues: Tryptophan 2,3-dioxygenase (306 aa).

The segment at 1-33 (MQPPGDDAAPRCPFAGAHAPDAPHVPEAAGDDA) is disordered. Substrate-binding positions include 75-79 (FIIQH), tyrosine 137, and arginine 141. Residue histidine 264 participates in heme binding. Threonine 278 contacts substrate.

Belongs to the tryptophan 2,3-dioxygenase family. In terms of assembly, homotetramer. It depends on heme as a cofactor.

The enzyme catalyses L-tryptophan + O2 = N-formyl-L-kynurenine. It participates in amino-acid degradation; L-tryptophan degradation via kynurenine pathway; L-kynurenine from L-tryptophan: step 1/2. In terms of biological role, heme-dependent dioxygenase that catalyzes the oxidative cleavage of the L-tryptophan (L-Trp) pyrrole ring and converts L-tryptophan to N-formyl-L-kynurenine. Catalyzes the oxidative cleavage of the indole moiety. This Burkholderia pseudomallei (strain 668) protein is Tryptophan 2,3-dioxygenase.